The primary structure comprises 688 residues: Methionine--tRNA ligase (688 aa).

Residues proline 13–histidine 23 carry the 'HIGH' region motif. The Zn(2+) site is built by cysteine 144, cysteine 147, cysteine 157, and cysteine 160. The 'KMSKS' region signature appears at lysine 335 to serine 339. ATP is bound at residue lysine 338. In terms of domain architecture, tRNA-binding spans aspartate 582–glycine 688.

It belongs to the class-I aminoacyl-tRNA synthetase family. MetG type 1 subfamily. In terms of assembly, homodimer. Requires Zn(2+) as cofactor.

Its subcellular location is the cytoplasm. It catalyses the reaction tRNA(Met) + L-methionine + ATP = L-methionyl-tRNA(Met) + AMP + diphosphate. In terms of biological role, is required not only for elongation of protein synthesis but also for the initiation of all mRNA translation through initiator tRNA(fMet) aminoacylation. This Cupriavidus pinatubonensis (strain JMP 134 / LMG 1197) (Cupriavidus necator (strain JMP 134)) protein is Methionine--tRNA ligase.